The chain runs to 362 residues: tRNA-specific 2-thiouridylase MnmA 1 (362 aa).

Residues 29–36 (AMSGGVDS) and Met55 each bind ATP. Cys109 acts as the Nucleophile in catalysis. Cysteines 109 and 201 form a disulfide. Gly133 provides a ligand contact to ATP. Residues 151–153 (KDQ) form an interaction with tRNA region. Cys201 (cysteine persulfide intermediate) is an active-site residue.

It belongs to the MnmA/TRMU family.

The protein resides in the cytoplasm. The enzyme catalyses S-sulfanyl-L-cysteinyl-[protein] + uridine(34) in tRNA + AH2 + ATP = 2-thiouridine(34) in tRNA + L-cysteinyl-[protein] + A + AMP + diphosphate + H(+). Catalyzes the 2-thiolation of uridine at the wobble position (U34) of tRNA, leading to the formation of s(2)U34. This chain is tRNA-specific 2-thiouridylase MnmA 1, found in Fusobacterium nucleatum subsp. nucleatum (strain ATCC 25586 / DSM 15643 / BCRC 10681 / CIP 101130 / JCM 8532 / KCTC 2640 / LMG 13131 / VPI 4355).